We begin with the raw amino-acid sequence, 850 residues long: Pentatricopeptide repeat-containing protein At5g16860 (850 aa).

PPR repeat units follow at residues 58–88 (TLNLTSHLISTYISVGCLSHAVSLLRRFPPS), 91–125 (GVYHWNSLIRSYGDNGCANKCLYLFGLMHSLSWTP), 126–160 (DNYTFPFVFKACGEISSVRCGESAHALSLVTGFIS), 161–191 (NVFVGNALVAMYSRCRSLSDARKVFDEMSVW), 192–227 (DVVSWNSIIESYAKLGKPKVALEMFSRMTNEFGCRP), 228–262 (DNITLVNVLPPCASLGTHSLGKQLHCFAVTSEMIQ), 263–293 (NMFVGNCLVDMYAKCGMMDEANTVFSNMSVK), 294–328 (DVVSWNAMVAGYSQIGRFEDAVRLFEKMQEEKIKM), 329–363 (DVVTWSAAISGYAQRGLGYEALGVCRQMLSSGIKP), 364–398 (NEVTLISVLSGCASVGALMHGKEIHCYAIKYPIDL), 406–436 (ENMVINQLIDMYAKCKKVDTARAMFDSLSPK), 439–473 (DVVTWTVMIGGYSQHGDANKALELLSEMFEEDCQT), 476–510 (NAFTISCALVACASLAALRIGKQIHAYALRNQQNA), 512–542 (PLFVSNCLIDMYAKCGSISDARLVFDNMMAK), 543–577 (NEVTWTSLMTGYGMHGYGEEALGIFDEMRRIGFKL), 578–608 (DGVTLLVVLYACSHSGMIDQGMEYFNRMKTV), and 614–644 (GPEHYACLVDLLGRAGRLNAALRLIEEMPME). The segment at 649–724 (VWVAFLSCCR…RPGCSWVEGI (76 aa)) is type E motif. Residues 725-755 (KGTTTFFVGDKTHPHAKEIYQVLLDHMQRIK) form a type E(+) motif region. Residues 756-850 (DIGYVPETGF…NGSCSCKGYW (95 aa)) are type DYW motif.

The protein belongs to the PPR family. PCMP-H subfamily.

This chain is Pentatricopeptide repeat-containing protein At5g16860 (PCMP-H92), found in Arabidopsis thaliana (Mouse-ear cress).